A 105-amino-acid chain; its full sequence is UPF0235 protein RT0827 (105 aa).

It belongs to the UPF0235 family.

This chain is UPF0235 protein RT0827, found in Rickettsia typhi (strain ATCC VR-144 / Wilmington).